The sequence spans 238 residues: Ribosomal RNA small subunit methyltransferase G (238 aa).

S-adenosyl-L-methionine-binding positions include Gly-77, Phe-82, 128–129 (AE), and Arg-147.

Belongs to the methyltransferase superfamily. RNA methyltransferase RsmG family.

It is found in the cytoplasm. Specifically methylates the N7 position of guanine in position 535 of 16S rRNA. The polypeptide is Ribosomal RNA small subunit methyltransferase G (Listeria innocua serovar 6a (strain ATCC BAA-680 / CLIP 11262)).